Consider the following 954-residue polypeptide: Leucine--tRNA ligase (954 aa).

A 'HIGH' region motif is present at residues 67–78 (PYPSGAGLHVGH). Positions 729-733 (KMGKS) match the 'KMSKS' region motif. Lys-732 contacts ATP.

It belongs to the class-I aminoacyl-tRNA synthetase family.

The protein localises to the cytoplasm. The enzyme catalyses tRNA(Leu) + L-leucine + ATP = L-leucyl-tRNA(Leu) + AMP + diphosphate. The polypeptide is Leucine--tRNA ligase (Salinispora tropica (strain ATCC BAA-916 / DSM 44818 / JCM 13857 / NBRC 105044 / CNB-440)).